Reading from the N-terminus, the 1342-residue chain is DNA-directed RNA polymerase subunit beta (1342 aa).

Belongs to the RNA polymerase beta chain family. As to quaternary structure, the RNAP catalytic core consists of 2 alpha, 1 beta, 1 beta' and 1 omega subunit. When a sigma factor is associated with the core the holoenzyme is formed, which can initiate transcription.

The enzyme catalyses RNA(n) + a ribonucleoside 5'-triphosphate = RNA(n+1) + diphosphate. Functionally, DNA-dependent RNA polymerase catalyzes the transcription of DNA into RNA using the four ribonucleoside triphosphates as substrates. This is DNA-directed RNA polymerase subunit beta from Citrobacter koseri (strain ATCC BAA-895 / CDC 4225-83 / SGSC4696).